The following is a 177-amino-acid chain: ATP-dependent protease subunit HslV (177 aa).

The active site involves Thr-7. Na(+) contacts are provided by Ala-162, Cys-165, and Thr-168.

It belongs to the peptidase T1B family. HslV subfamily. As to quaternary structure, a double ring-shaped homohexamer of HslV is capped on each side by a ring-shaped HslU homohexamer. The assembly of the HslU/HslV complex is dependent on binding of ATP.

It localises to the cytoplasm. The catalysed reaction is ATP-dependent cleavage of peptide bonds with broad specificity.. Its activity is regulated as follows. Allosterically activated by HslU binding. Functionally, protease subunit of a proteasome-like degradation complex believed to be a general protein degrading machinery. This chain is ATP-dependent protease subunit HslV, found in Thioalkalivibrio sulfidiphilus (strain HL-EbGR7).